A 275-amino-acid polypeptide reads, in one-letter code: ATP synthase subunit delta (275 aa).

Belongs to the ATPase delta chain family. F-type ATPases have 2 components, F(1) - the catalytic core - and F(0) - the membrane proton channel. F(1) has five subunits: alpha(3), beta(3), gamma(1), delta(1), epsilon(1). F(0) has three main subunits: a(1), b(2) and c(10-14). The alpha and beta chains form an alternating ring which encloses part of the gamma chain. F(1) is attached to F(0) by a central stalk formed by the gamma and epsilon chains, while a peripheral stalk is formed by the delta and b chains.

It localises to the cell membrane. In terms of biological role, f(1)F(0) ATP synthase produces ATP from ADP in the presence of a proton or sodium gradient. F-type ATPases consist of two structural domains, F(1) containing the extramembraneous catalytic core and F(0) containing the membrane proton channel, linked together by a central stalk and a peripheral stalk. During catalysis, ATP synthesis in the catalytic domain of F(1) is coupled via a rotary mechanism of the central stalk subunits to proton translocation. This protein is part of the stalk that links CF(0) to CF(1). It either transmits conformational changes from CF(0) to CF(1) or is implicated in proton conduction. The chain is ATP synthase subunit delta from Bifidobacterium adolescentis (strain ATCC 15703 / DSM 20083 / NCTC 11814 / E194a).